Consider the following 169-residue polypeptide: Small ribosomal subunit protein uS5 (169 aa).

Residues leucine 14–valine 77 form the S5 DRBM domain.

It belongs to the universal ribosomal protein uS5 family. In terms of assembly, part of the 30S ribosomal subunit. Contacts proteins S4 and S8.

Functionally, with S4 and S12 plays an important role in translational accuracy. Located at the back of the 30S subunit body where it stabilizes the conformation of the head with respect to the body. The protein is Small ribosomal subunit protein uS5 of Limosilactobacillus reuteri (strain DSM 20016) (Lactobacillus reuteri).